Reading from the N-terminus, the 486-residue chain is Protein DETOXIFICATION 16 (486 aa).

The next 12 helical transmembrane spans lie at 35-55 (GPLIAVSLLQFCLQVISVMFV), 68-88 (IATSFASVTGFSFLMGTASAL), 117-137 (LASIPLSIIWANTEHLLVFFG), 142-162 (IATLAGSYAKFMIPSIFAYGL), 179-199 (VVFCSGVTTSLHVLLCWVLVF), 207-227 (GAALANSISYWLNVVLLFCYV), 259-279 (ALMVCLEMWSFELLVLLSGLL), 288-308 (VLSICLNTSGTMWMIPFGLSG), 331-351 (RVVICIAVAESIVIGSVLILI), 365-385 (VVSYVASMMPILALGNFLDSL), 401-421 (IGAIINLGSYYLVGVPSGLLL), and 433-453 (WLGIICALVVQVFGLGLVTIF).

It belongs to the multi antimicrobial extrusion (MATE) (TC 2.A.66.1) family.

The protein resides in the membrane. This is Protein DETOXIFICATION 16 from Arabidopsis thaliana (Mouse-ear cress).